Consider the following 348-residue polypeptide: PDZ and LIM domain protein 2 (348 aa).

The PDZ domain maps to 1–84 (MALTVDVVGP…PLRLQLDRPQ (84 aa)). Residues 67-139 (SKIRQSPSPL…PPTSPQAPTG (73 aa)) form a disordered region. Positions 103 to 118 (RFQSSRRTHTDSQASL) are enriched in polar residues. A phosphoserine mark is found at serine 117, serine 119, and serine 124. Phosphothreonine is present on residues threonine 128 and threonine 132. 8 positions are modified to phosphoserine: serine 133, serine 153, serine 191, serine 197, serine 198, serine 202, serine 209, and serine 262. Residues 165–202 (GGRRGSRQASLSPAGDSAVLVLPPPPSPGARSSSSRLS) are disordered. The span at 193–202 (GARSSSSRLS) shows a compositional bias: low complexity. The disordered stretch occupies residues 249 to 275 (ERGGTPAYLPSSLSPQSSLPTSRALAS). The segment covering 257-270 (LPSSLSPQSSLPTS) has biased composition (low complexity). The LIM zinc-binding domain occupies 280 to 340 (HTCEKCNTSI…EKHARQRYSA (61 aa)).

In terms of assembly, interacts with alpha-actinins ACTN1 and ACTN4, FLNA and MYH9. Interacts (via LIM zinc-binding domain) with MKRN2.

Its subcellular location is the cytoplasm. The protein localises to the cytoskeleton. Functionally, probable adapter protein located at the actin cytoskeleton that promotes cell attachment. Necessary for the migratory capacity of epithelial cells. Overexpression enhances cell adhesion to collagen and fibronectin and suppresses anchorage independent growth. May contribute to tumor cell migratory capacity. In Bos taurus (Bovine), this protein is PDZ and LIM domain protein 2 (PDLIM2).